The sequence spans 445 residues: tRNA-2-methylthio-N(6)-dimethylallyladenosine synthase (445 aa).

One can recognise an MTTase N-terminal domain in the interval 2–122; sequence KKAFVKSYGC…LPDLLARSRE (121 aa). [4Fe-4S] cluster is bound by residues cysteine 11, cysteine 47, cysteine 85, cysteine 157, cysteine 161, and cysteine 164. The Radical SAM core domain occupies 143 to 378; that stretch reads RTLGASAFLT…LDSQRHAYQR (236 aa). The region spanning 378-440 is the TRAM domain; it reads RAAAGRVFDV…SNSLFGELVS (63 aa).

The protein belongs to the methylthiotransferase family. MiaB subfamily. In terms of assembly, monomer. The cofactor is [4Fe-4S] cluster.

The protein resides in the cytoplasm. The catalysed reaction is N(6)-dimethylallyladenosine(37) in tRNA + (sulfur carrier)-SH + AH2 + 2 S-adenosyl-L-methionine = 2-methylsulfanyl-N(6)-dimethylallyladenosine(37) in tRNA + (sulfur carrier)-H + 5'-deoxyadenosine + L-methionine + A + S-adenosyl-L-homocysteine + 2 H(+). Its function is as follows. Catalyzes the methylthiolation of N6-(dimethylallyl)adenosine (i(6)A), leading to the formation of 2-methylthio-N6-(dimethylallyl)adenosine (ms(2)i(6)A) at position 37 in tRNAs that read codons beginning with uridine. This chain is tRNA-2-methylthio-N(6)-dimethylallyladenosine synthase, found in Methylobacterium radiotolerans (strain ATCC 27329 / DSM 1819 / JCM 2831 / NBRC 15690 / NCIMB 10815 / 0-1).